Consider the following 330-residue polypeptide: Quinone oxidoreductase (330 aa).

At Ala-2 the chain carries N-acetylalanine. Lys-23 carries the post-translational modification N6-acetyllysine. NADP(+) is bound by residues Tyr-53, 158-161 (SGGV), Gly-181, His-200, Asn-229, 246-249 (VGSK), and 269-271 (VTL). Ser-248 carries the phosphoserine modification.

The protein belongs to the zinc-containing alcohol dehydrogenase family. Quinone oxidoreductase subfamily. As to quaternary structure, homotetramer.

The protein resides in the cytoplasm. It catalyses the reaction 2 a quinone + NADPH + H(+) = 2 a 1,4-benzosemiquinone + NADP(+). In terms of biological role, does not have alcohol dehydrogenase activity. Binds NADP and acts through a one-electron transfer process. Orthoquinones, such as 1,2-naphthoquinone or 9,10-phenanthrenequinone, are the best substrates (in vitro). May act in the detoxification of xenobiotics. Interacts with (AU)-rich elements (ARE) in the 3'-UTR of target mRNA species and enhances their stability. NADPH binding interferes with mRNA binding. The polypeptide is Quinone oxidoreductase (CRYZ) (Lama guanicoe (Guanaco)).